The sequence spans 1017 residues: Adhesion G-protein coupled receptor G2 (1017 aa).

The signal sequence occupies residues 1 to 37; sequence MVFSVRQCGHVGRTEEVLLTFKIFLVIICLHVVLVTS. The Extracellular segment spans residues 38-627; the sequence is LEEDTDNSSL…TSVLPAQMMA (590 aa). N-linked (GlcNAc...) asparagine glycans are attached at residues Asn44, Asn85, Asn99, Asn111, Asn117, Asn144, Asn162, Asn186, and Asn194. Residues 301-366 are disordered; that stretch reads PLSPQPSAPI…NTTSAPPVQT (66 aa). A compositionally biased stretch (low complexity) spans 308 to 320; the sequence is APIASSPAIDMPP. Composition is skewed to polar residues over residues 321–335 and 344–366; these read QSET…THVS and SFSS…PVQT. 11 N-linked (GlcNAc...) asparagine glycosylation sites follow: Asn357, Asn370, Asn435, Asn438, Asn456, Asn461, Asn528, Asn542, Asn547, Asn551, and Asn597. The 158-residue stretch at 462–619 folds into the GAIN-B domain; it reads TTTFVAQDPA…GVLLDLSRTS (158 aa). 2 disulfide bridges follow: Cys570/Cys601 and Cys589/Cys603. Residues 570-619 form a GPS region; it reads CVFWDLGRNGGRGGWSDNGCSVKDRRLNETICTCSHLTSFGVLLDLSRTS. The stachel stretch occupies residues 608-619; that stretch reads SFGVLLDLSRTS. A helical membrane pass occupies residues 628-648; the sequence is LTFITYIGCGLSSIFLSVTLV. The Cytoplasmic portion of the chain corresponds to 649–667; it reads TYIAFEKIRRDYPSKILIQ. The helical transmembrane segment at 668–688 threads the bilayer; it reads LCAALLLLNLVFLLDSWIALY. The Extracellular segment spans residues 689–693; it reads KMQGL. Residues 694 to 714 traverse the membrane as a helical segment; sequence CISVAVFLHYFLLVSFTWMGL. Cys694 and Cys778 form a disulfide bridge. Residues 715–737 lie on the Cytoplasmic side of the membrane; it reads EAFHMYLALVKVFNTYIRKYILK. The helical transmembrane segment at 738-758 threads the bilayer; it reads FCIVGWGVPAVVVTIILTISP. Residues 759 to 789 lie on the Extracellular side of the membrane; sequence DNYGLGSYGKFPNGSPDDFCWINNNAVFYIT. The helical transmembrane segment at 790–810 threads the bilayer; the sequence is VVGYFCVIFLLNVSMFIVVLV. At 811–834 the chain is on the cytoplasmic side; sequence QLCRIKKKKQLGAQRKTSIQDLRS. A helical transmembrane segment spans residues 835 to 855; that stretch reads IAGLTFLLGITWGFAFFAWGP. Topologically, residues 856 to 857 are extracellular; sequence VN. An N-linked (GlcNAc...) asparagine glycan is attached at Asn857. A helical transmembrane segment spans residues 858–878; sequence VTFMYLFAIFNTLQGFFIFIF. Asn868 serves as a coordination point for 3beta-hydroxyandrost-5-en-17-one. At 879-1017 the chain is on the cytoplasmic side; it reads YCVAKENVRK…RGSLHFIEQM (139 aa). Positions 918-939 are disordered; it reads QTVNQGVSSSSNSLQSSSNSTN. Phosphoserine is present on Ser1010.

Belongs to the G-protein coupled receptor 2 family. Adhesion G-protein coupled receptor (ADGR) subfamily. In terms of assembly, heterodimer of 2 chains generated by proteolytic processing; the large extracellular N-terminal fragment and the membrane-bound C-terminal fragment predominantly remain associated and non-covalently linked. Interacts with CFTR. Proteolytically cleaved into 2 subunits, an extracellular subunit and a seven-transmembrane subunit. In terms of processing, highly glycosylated. Epididymis-specific expression (at protein level). Both subunits are associated with apical membranes of efferent ductule and proximal epididymal duct epithelia. Mainly expressed in the nonciliated principal cells of the proximal excurrent ducts. Specifically over-expressed in Ewing sarcomas but also up-regulated in a number of carcinomas derived from prostate, kidney or lung.

It is found in the apical cell membrane. Its activity is regulated as follows. Forms a heterodimer of 2 chains generated by proteolytic processing that remain associated through non-covalent interactions mediated by the GAIN-B domain. In the inactivated receptor, the Stachel sequence (also named stalk) is embedded in the GAIN-B domain, where it adopts a beta-strand conformation. On activation, the Stachel moves into the 7 transmembrane region and adopts a twisted hook-shaped configuration that forms contacts within the receptor, leading to coupling of a G-alpha protein, which activates signaling. The cleaved GAIN-B and N-terminal domains can then dissociate from the rest of the receptor. Deoxycorticosterone (DOC) acts as an antagonist of ADGRG2. In terms of biological role, adhesion G-protein coupled receptor (aGPCR) for steroid hormones, such as dehydroepiandrosterone (DHEA; also named 3beta-hydroxyandrost-5-en-17-one) and androstenedione. Involved in a signal transduction pathway controlling epididymal function and male fertility. Ligand binding causes a conformation change that triggers signaling via guanine nucleotide-binding proteins (G proteins) and modulates the activity of downstream effectors, such as adenylate cyclase. ADGRG2 is coupled to G(s) G proteins and mediates activation of adenylate cyclase activity. Also able to couple with G(q) G proteins in vitro. Together with CFTR, required to promote fluid reabsorption within efferent ductule. The chain is Adhesion G-protein coupled receptor G2 from Homo sapiens (Human).